A 357-amino-acid chain; its full sequence is Cyclin-Y (357 aa).

Residues 1-13 show a composition bias toward polar residues; sequence MGNSSCCLRTRSS. Positions 1–23 are disordered; that stretch reads MGNSSCCLRTRSSSGEDKSYNND. Residues 186–284 enclose the Cyclin N-terminal domain; the sequence is PDHRNIYRFV…RFLECLDFNI (99 aa).

It belongs to the cyclin family. Interacts with pct-1; the interaction is required to activate pct-1.

The protein resides in the cytoplasm. It is found in the cell projection. The protein localises to the dendrite. It localises to the axon. In terms of biological role, in association with pct-1, regulates the trafficking of synaptic vesicle precursors in DA motor neurons by promoting anterograde trafficking to the axon and preventing dynein-dependent trafficking to the dendrite. May also regulate synaptic vesicle trafficking in DD motor neurons and in RIA interneurons. Involved in synapse formation during DD motor neuron remodeling by disassembling ventral presynaptic structures. May activate cdk-5. This chain is Cyclin-Y, found in Caenorhabditis elegans.